The sequence spans 628 residues: CMP-5'-(3-aminopropyl)phosphonate synthase (628 aa).

The segment at 1 to 255 (MNENRTFATP…DPGDQRQADF (255 aa)) is mobA-like NTP transferase. Residues 278–628 (GVTDHALLYN…TTEGAGRADG (351 aa)) form a decarboxylase region. K466 is subject to N6-(pyridoxal phosphate)lysine.

In the N-terminal section; belongs to the MobA family. This sequence in the C-terminal section; belongs to the class-I pyridoxal-phosphate-dependent aminotransferase family. Mg(2+) is required as a cofactor. Pyridoxal 5'-phosphate serves as cofactor.

It carries out the reaction 2-amino-4-phosphonobutanoate + CTP = CMP-5'-(3-amino-3-carboxypropyl)phosphonate + diphosphate. The catalysed reaction is CMP-5'-(3-amino-3-carboxypropyl)phosphonate + H(+) = CMP-5'-(3-aminopropyl)phosphonate + CO2. Its pathway is antibiotic biosynthesis. In terms of biological role, bifunctional cytidylyltransferase/decarboxylase involved in the biosynthesis of the phosphonate antibiotic FR-900098, a potent antimalarial agent that acts as an inhibitor of 1-deoxy-D-xylulose 5-phosphate reductoisomerase (DXR), the first enzyme in the nonmevalonate pathway for isoprenoid biosynthesis. Catalyzes the condensation of 2-amino-4-phosphonobutyrate (2APn) and CTP to form CMP-5'-2APn and then decarboxylates CMP-5'-2APn to yield CMP-5'-(3-aminopropyl)phosphonate (CMP-5'-3APn). This chain is CMP-5'-(3-aminopropyl)phosphonate synthase, found in Streptomyces rubellomurinus (strain ATCC 31215).